The chain runs to 208 residues: Pyrophosphate-energized proton pump 2 (208 aa).

The next 5 membrane-spanning stretches (helical) occupy residues 19-39 (AYPL…TFFV), 54-74 (GLIV…SFTI), 89-109 (GGNL…IVVI), 140-160 (LAVS…GIIA), and 167-187 (LFGT…IVAL).

The protein belongs to the H(+)-translocating pyrophosphatase (TC 3.A.10) family. As to quaternary structure, homodimer. It depends on Mg(2+) as a cofactor.

The protein localises to the cell inner membrane. It carries out the reaction diphosphate + H2O + H(+)(in) = 2 phosphate + 2 H(+)(out). Its function is as follows. Proton pump that utilizes the energy of pyrophosphate hydrolysis as the driving force for proton movement across the membrane. Generates a proton motive force. The chain is Pyrophosphate-energized proton pump 2 (hppA2) from Mycoplana dimorpha.